Here is a 373-residue protein sequence, read N- to C-terminus: ATP phosphoribosyltransferase regulatory subunit (373 aa).

Belongs to the class-II aminoacyl-tRNA synthetase family. HisZ subfamily. In terms of assembly, heteromultimer composed of HisG and HisZ subunits.

It localises to the cytoplasm. It participates in amino-acid biosynthesis; L-histidine biosynthesis; L-histidine from 5-phospho-alpha-D-ribose 1-diphosphate: step 1/9. Required for the first step of histidine biosynthesis. May allow the feedback regulation of ATP phosphoribosyltransferase activity by histidine. This chain is ATP phosphoribosyltransferase regulatory subunit, found in Rhizobium etli (strain CIAT 652).